The sequence spans 571 residues: Glutamate--tRNA ligase (571 aa).

The 'HIGH' region motif lies at proline 110–serine 120.

This sequence belongs to the class-I aminoacyl-tRNA synthetase family. Glutamate--tRNA ligase type 2 subfamily.

Its subcellular location is the cytoplasm. It carries out the reaction tRNA(Glu) + L-glutamate + ATP = L-glutamyl-tRNA(Glu) + AMP + diphosphate. Catalyzes the attachment of glutamate to tRNA(Glu) in a two-step reaction: glutamate is first activated by ATP to form Glu-AMP and then transferred to the acceptor end of tRNA(Glu). The chain is Glutamate--tRNA ligase from Methanosarcina mazei (strain ATCC BAA-159 / DSM 3647 / Goe1 / Go1 / JCM 11833 / OCM 88) (Methanosarcina frisia).